The following is a 464-amino-acid chain: Glutathione reductase (464 aa).

Residues serine 17 and glycine 18 each contribute to the FAD site. Serine 17 is a glutathione binding site. Arginine 24 lines the glutathione pocket. Positions 37, 45, 46, and 54 each coordinate FAD. An intrachain disulfide couples cysteine 46 to cysteine 51. Residue tyrosine 103 coordinates glutathione. Alanine 119 serves as a coordination point for FAD. NADP(+) contacts are provided by alanine 186, isoleucine 189, glutamate 192, arginine 209, arginine 215, and glycine 274. Aspartate 315 is a binding site for FAD. Glutamate 321 is a binding site for NADP(+). Threonine 323 contacts FAD. Arginine 331 lines the glutathione pocket. Residue valine 354 coordinates NADP(+). Histidine 453 is a binding site for FAD. Residue histidine 453 is the Proton acceptor of the active site.

It belongs to the class-I pyridine nucleotide-disulfide oxidoreductase family. Homodimer. It depends on FAD as a cofactor.

It localises to the cytoplasm. Its subcellular location is the mitochondrion. The catalysed reaction is 2 glutathione + NADP(+) = glutathione disulfide + NADPH + H(+). In terms of biological role, catalyzes the reduction of glutathione disulfide (GSSG) to reduced glutathione (GSH). Constitutes the major mechanism to maintain a high GSH:GSSG ratio in the cytosol. This chain is Glutathione reductase (pgr1), found in Schizosaccharomyces pombe (strain 972 / ATCC 24843) (Fission yeast).